The following is a 562-amino-acid chain: 4-coumarate--CoA ligase-like 9 (562 aa).

ATP is bound by residues serine 212, serine 213, glycine 214, threonine 215, threonine 216, and lysine 220. Arginine 281 provides a ligand contact to CoA. Residues 283-352 (ELEAMFKAVE…QKFPDVDIVQ (70 aa)) form an SBD1 region. ATP-binding residues include glutamine 352, glycine 353, threonine 357, aspartate 438, and arginine 453. Residues 353–417 (GYGLTESSGP…LRGPVIMKGY (65 aa)) form an SBD2 region. CoA is bound by residues lysine 461 and alanine 462. Lysine 544 serves as a coordination point for ATP. The Microbody targeting signal signature appears at 560-562 (SKL).

This sequence belongs to the ATP-dependent AMP-binding enzyme family. Requires Mg(2+) as cofactor. As to expression, expressed at low level in leaves.

It is found in the peroxisome. The enzyme catalyses (9S,13S,15Z)-12-oxophyto-10,15-dienoate + ATP + CoA = (10Z,15Z)-12-oxophytodienoyl-CoA + AMP + diphosphate. It carries out the reaction hexadecanoate + ATP + CoA = hexadecanoyl-CoA + AMP + diphosphate. The catalysed reaction is (9Z)-octadecenoate + ATP + CoA = (9Z)-octadecenoyl-CoA + AMP + diphosphate. It catalyses the reaction octadecanoate + ATP + CoA = octadecanoyl-CoA + AMP + diphosphate. The enzyme catalyses tetradecanoate + ATP + CoA = tetradecanoyl-CoA + AMP + diphosphate. It carries out the reaction dodecanoate + ATP + CoA = dodecanoyl-CoA + AMP + diphosphate. The catalysed reaction is decanoate + ATP + CoA = decanoyl-CoA + AMP + diphosphate. It catalyses the reaction octanoate + ATP + CoA = octanoyl-CoA + AMP + diphosphate. The enzyme catalyses (9Z,12Z)-octadecadienoate + ATP + CoA = (9Z,12Z)-octadecadienoyl-CoA + AMP + diphosphate. It carries out the reaction (9Z,12Z,15Z)-octadecatrienoate + ATP + CoA = (9Z,12Z,15Z)-octadecatrienoyl-CoA + AMP + diphosphate. The catalysed reaction is nonanoate + ATP + CoA = nonanoyl-CoA + AMP + diphosphate. Its function is as follows. Contributes to jasmonic acid biosynthesis by initiating the beta-oxidative chain shortening of its precursors. Converts 12-oxo-phytodienoic acid (OPDA) into OPDA-CoA. Follows a two-step reaction mechanism, wherein the carboxylate substrate first undergoes adenylation by ATP, followed by a thioesterification in the presence of CoA to yield the final CoA thioester. The sequence is that of 4-coumarate--CoA ligase-like 9 from Arabidopsis thaliana (Mouse-ear cress).